The following is a 255-amino-acid chain: Developmental and secondary metabolism regulator MVE1 (255 aa).

A Velvet domain is found at 31-226; sequence GRKLTYRMSV…AEQGCRVRIR (196 aa). Residues 45-50 carry the Nuclear localization signal motif; it reads VRARAC. 2 disordered regions span residues 163-184 and 229-255; these read CKSP…DAHV and VRMR…QARA. Residues 245–255 show a composition bias toward acidic residues; the sequence is NYEDETAQARA.

It belongs to the velvet family. VeA subfamily. In terms of assembly, component of the heterotrimeric velvet complex composed of LAE1, MVE1 and VEL2; MVE1 acting as a bridging protein between LAE1 and VEL2.

The protein resides in the nucleus. It localises to the cytoplasm. Component of the velvet transcription factor complex that controls sexual/asexual developmental ratio in response to light, promoting sexual development in the darkness while stimulating asexual sporulation under illumination. The velvet complex hat acts as a global regulator for secondary metabolite gene expression. Controls the expression of the melanin gene cluster. Mediates the light-stimulated formation of aerial mycelia. This chain is Developmental and secondary metabolism regulator MVE1, found in Zymoseptoria tritici (strain CBS 115943 / IPO323) (Speckled leaf blotch fungus).